Reading from the N-terminus, the 282-residue chain is Uridylate-specific endoribonuclease B (282 aa).

Residues 4-278 (GDRELSALIQ…IGTTYPVPVK (275 aa)) form the EndoU domain. Catalysis depends on residues histidine 156, histidine 172, and lysine 218.

This sequence belongs to the ENDOU family. Monomer. Mn(2+) is required as a cofactor.

It catalyses the reaction ribonucleotidyl-uridine-RNA = a 5'-end dephospho-uridine-RNA + a 3'-end 2',3'-cyclophospho-ribonucleotide-RNA. In terms of biological role, endoribonuclease that cleaves single-stranded RNAs at 5' of uridylates and releases a product with a 2',3'-cyclic phosphate at the 3'-end. The UU and GU sites are more efficiently cleaved than CU and AU sites. The protein is Uridylate-specific endoribonuclease B (endoub) of Danio rerio (Zebrafish).